Here is a 453-residue protein sequence, read N- to C-terminus: tRNA-2-methylthio-N(6)-dimethylallyladenosine synthase (453 aa).

Positions 7–123 constitute an MTTase N-terminal domain; it reads GTYWITTFGC…LDTLLSQVEA (117 aa). [4Fe-4S] cluster-binding residues include cysteine 16, cysteine 52, cysteine 86, cysteine 158, cysteine 162, and cysteine 165. Positions 144 to 381 constitute a Radical SAM core domain; the sequence is RDSSLCAWVN…NALVERKAKA (238 aa). The TRAM domain occupies 384–447; the sequence is QRYLGRVEEV…AFSLSGSAQA (64 aa).

Belongs to the methylthiotransferase family. MiaB subfamily. As to quaternary structure, monomer. [4Fe-4S] cluster serves as cofactor.

It is found in the cytoplasm. It carries out the reaction N(6)-dimethylallyladenosine(37) in tRNA + (sulfur carrier)-SH + AH2 + 2 S-adenosyl-L-methionine = 2-methylsulfanyl-N(6)-dimethylallyladenosine(37) in tRNA + (sulfur carrier)-H + 5'-deoxyadenosine + L-methionine + A + S-adenosyl-L-homocysteine + 2 H(+). Its function is as follows. Catalyzes the methylthiolation of N6-(dimethylallyl)adenosine (i(6)A), leading to the formation of 2-methylthio-N6-(dimethylallyl)adenosine (ms(2)i(6)A) at position 37 in tRNAs that read codons beginning with uridine. In Synechococcus sp. (strain RCC307), this protein is tRNA-2-methylthio-N(6)-dimethylallyladenosine synthase.